A 156-amino-acid polypeptide reads, in one-letter code: Small ribosomal subunit protein uS7 (156 aa).

It belongs to the universal ribosomal protein uS7 family. As to quaternary structure, part of the 30S ribosomal subunit. Contacts proteins S9 and S11.

In terms of biological role, one of the primary rRNA binding proteins, it binds directly to 16S rRNA where it nucleates assembly of the head domain of the 30S subunit. Is located at the subunit interface close to the decoding center, probably blocks exit of the E-site tRNA. The protein is Small ribosomal subunit protein uS7 of Bacillus cereus (strain G9842).